Here is a 381-residue protein sequence, read N- to C-terminus: Mannitol-1-phosphate 5-dehydrogenase (381 aa).

Position 3-14 (3-14) interacts with NAD(+); it reads TLHFGAGNIGRG.

It belongs to the mannitol dehydrogenase family.

It catalyses the reaction D-mannitol 1-phosphate + NAD(+) = beta-D-fructose 6-phosphate + NADH + H(+). This Aeromonas salmonicida (strain A449) protein is Mannitol-1-phosphate 5-dehydrogenase.